The chain runs to 157 residues: 2-C-methyl-D-erythritol 2,4-cyclodiphosphate synthase (157 aa).

Asp8 and His10 together coordinate a divalent metal cation. Residues 8 to 10 (DVH) and 34 to 35 (HS) each bind 4-CDP-2-C-methyl-D-erythritol 2-phosphate. His42 is an a divalent metal cation binding site. 4-CDP-2-C-methyl-D-erythritol 2-phosphate is bound by residues 56–58 (DIG), 61–65 (FPDTD), 100–106 (AQAPKMA), 132–135 (TTTE), Phe139, and Arg142.

The protein belongs to the IspF family. In terms of assembly, homotrimer. It depends on a divalent metal cation as a cofactor.

The catalysed reaction is 4-CDP-2-C-methyl-D-erythritol 2-phosphate = 2-C-methyl-D-erythritol 2,4-cyclic diphosphate + CMP. Its pathway is isoprenoid biosynthesis; isopentenyl diphosphate biosynthesis via DXP pathway; isopentenyl diphosphate from 1-deoxy-D-xylulose 5-phosphate: step 4/6. Its function is as follows. Involved in the biosynthesis of isopentenyl diphosphate (IPP) and dimethylallyl diphosphate (DMAPP), two major building blocks of isoprenoid compounds. Catalyzes the conversion of 4-diphosphocytidyl-2-C-methyl-D-erythritol 2-phosphate (CDP-ME2P) to 2-C-methyl-D-erythritol 2,4-cyclodiphosphate (ME-CPP) with a corresponding release of cytidine 5-monophosphate (CMP). This is 2-C-methyl-D-erythritol 2,4-cyclodiphosphate synthase from Pseudomonas fluorescens (strain SBW25).